The chain runs to 215 residues: RWD domain-containing protein C1393.09c (215 aa).

Residues 7–114 form the RWD domain; that stretch reads EEREILESIY…SVAKEETNAI (108 aa).

The protein localises to the cytoplasm. It localises to the nucleus. The polypeptide is RWD domain-containing protein C1393.09c (Schizosaccharomyces pombe (strain 972 / ATCC 24843) (Fission yeast)).